A 358-amino-acid polypeptide reads, in one-letter code: Nicotinate-nucleotide--dimethylbenzimidazole phosphoribosyltransferase (358 aa).

Residue E313 is the Proton acceptor of the active site.

Belongs to the CobT family.

It catalyses the reaction 5,6-dimethylbenzimidazole + nicotinate beta-D-ribonucleotide = alpha-ribazole 5'-phosphate + nicotinate + H(+). It functions in the pathway nucleoside biosynthesis; alpha-ribazole biosynthesis; alpha-ribazole from 5,6-dimethylbenzimidazole: step 1/2. In terms of biological role, catalyzes the synthesis of alpha-ribazole-5'-phosphate from nicotinate mononucleotide (NAMN) and 5,6-dimethylbenzimidazole (DMB). The sequence is that of Nicotinate-nucleotide--dimethylbenzimidazole phosphoribosyltransferase from Corynebacterium glutamicum (strain R).